The chain runs to 300 residues: MNQSYGRLVSRAAIAATAMASALLLIKIFAWWYTGSVSILAALVDSLVDIAASLTNLLVVRYSLQPADEEHTFGHGKAESLAALAQSMFISGSALFLFLTGIQHLVRPEPLQAAGVGVVVTLIALVSTLALVTFQRWVVRKTQSQAVRADMLHYQSDVMMNGAILVALGLSWYGWHRADALFALGIGIYILYSALRMGYEAVQSLLDRALPDEERQDIITIVTAWPGIRGAHDLRTRQSGPTRFIQIHLEMEDNLPLVQAHVIADQVEQAILRRFPGSDVIIHQDPSSVVPAAQQGFFER.

Residues 24–44 (LLIKIFAWWYTGSVSILAALV) traverse the membrane as a helical segment. Zn(2+) is bound by residues Asp-45 and Asp-49. The next 2 membrane-spanning stretches (helical) occupy residues 82–102 (AALAQSMFISGSALFLFLTGI) and 114–134 (AGVGVVVTLIALVSTLALVTF). Residues His-153 and Asp-157 each coordinate Zn(2+). 2 consecutive transmembrane segments (helical) span residues 156–176 (SDVMMNGAILVALGLSWYGWH) and 178–198 (ADALFALGIGIYILYSALRMG).

Belongs to the cation diffusion facilitator (CDF) transporter (TC 2.A.4) family. FieF subfamily. In terms of assembly, homodimer.

The protein resides in the cell inner membrane. The enzyme catalyses Zn(2+)(in) + H(+)(out) = Zn(2+)(out) + H(+)(in). It catalyses the reaction Cd(2+)(in) + H(+)(out) = Cd(2+)(out) + H(+)(in). The catalysed reaction is Fe(2+)(in) + H(+)(out) = Fe(2+)(out) + H(+)(in). Its function is as follows. Divalent metal cation transporter which exports Zn(2+), Cd(2+) and possibly Fe(2+). May be involved in zinc and iron detoxification by efflux. This is Cation-efflux pump FieF from Klebsiella pneumoniae subsp. pneumoniae (strain ATCC 700721 / MGH 78578).